A 463-amino-acid chain; its full sequence is Cysteine--tRNA ligase (463 aa).

Position 27 (cysteine 27) interacts with Zn(2+). The 'HIGH' region signature appears at 29-39; the sequence is PTVYGLIHIGN. Residues cysteine 207, histidine 232, and glutamate 236 each coordinate Zn(2+). The 'KMSKS' region signature appears at 264-268; it reads KMSKS. Lysine 267 lines the ATP pocket.

Belongs to the class-I aminoacyl-tRNA synthetase family. Monomer. Zn(2+) is required as a cofactor.

Its subcellular location is the cytoplasm. The catalysed reaction is tRNA(Cys) + L-cysteine + ATP = L-cysteinyl-tRNA(Cys) + AMP + diphosphate. In Pseudothermotoga lettingae (strain ATCC BAA-301 / DSM 14385 / NBRC 107922 / TMO) (Thermotoga lettingae), this protein is Cysteine--tRNA ligase.